Reading from the N-terminus, the 155-residue chain is SsrA-binding protein (155 aa).

The protein belongs to the SmpB family.

Its subcellular location is the cytoplasm. In terms of biological role, required for rescue of stalled ribosomes mediated by trans-translation. Binds to transfer-messenger RNA (tmRNA), required for stable association of tmRNA with ribosomes. tmRNA and SmpB together mimic tRNA shape, replacing the anticodon stem-loop with SmpB. tmRNA is encoded by the ssrA gene; the 2 termini fold to resemble tRNA(Ala) and it encodes a 'tag peptide', a short internal open reading frame. During trans-translation Ala-aminoacylated tmRNA acts like a tRNA, entering the A-site of stalled ribosomes, displacing the stalled mRNA. The ribosome then switches to translate the ORF on the tmRNA; the nascent peptide is terminated with the 'tag peptide' encoded by the tmRNA and targeted for degradation. The ribosome is freed to recommence translation, which seems to be the essential function of trans-translation. The chain is SsrA-binding protein from Streptococcus uberis (strain ATCC BAA-854 / 0140J).